The primary structure comprises 351 residues: Glycerol-3-phosphate dehydrogenase [NAD(P)+] (351 aa).

Positions 18, 19, 38, and 122 each coordinate NADPH. 3 residues coordinate sn-glycerol 3-phosphate: Lys-122, Gly-153, and Ser-155. Residue Ala-157 participates in NADPH binding. The sn-glycerol 3-phosphate site is built by Lys-208, Asp-261, Ser-271, Arg-272, and Asn-273. The active-site Proton acceptor is the Lys-208. Arg-272 is an NADPH binding site. Glu-297 is a binding site for NADPH.

Belongs to the NAD-dependent glycerol-3-phosphate dehydrogenase family.

It is found in the cytoplasm. It carries out the reaction sn-glycerol 3-phosphate + NAD(+) = dihydroxyacetone phosphate + NADH + H(+). The catalysed reaction is sn-glycerol 3-phosphate + NADP(+) = dihydroxyacetone phosphate + NADPH + H(+). It participates in membrane lipid metabolism; glycerophospholipid metabolism. Catalyzes the reduction of the glycolytic intermediate dihydroxyacetone phosphate (DHAP) to sn-glycerol 3-phosphate (G3P), the key precursor for phospholipid synthesis. This is Glycerol-3-phosphate dehydrogenase [NAD(P)+] from Bordetella parapertussis (strain 12822 / ATCC BAA-587 / NCTC 13253).